The chain runs to 265 residues: 4-hydroxy-tetrahydrodipicolinate reductase (265 aa).

Residues 7 to 12 (GASGRM) and Asp-33 contribute to the NAD(+) site. Residue Arg-34 participates in NADP(+) binding. NAD(+)-binding positions include 96-98 (GTT) and 120-123 (AANM). His-153 (proton donor/acceptor) is an active-site residue. (S)-2,3,4,5-tetrahydrodipicolinate is bound at residue His-154. Lys-157 (proton donor) is an active-site residue. 163-164 (GT) is a binding site for (S)-2,3,4,5-tetrahydrodipicolinate.

This sequence belongs to the DapB family.

It is found in the cytoplasm. The catalysed reaction is (S)-2,3,4,5-tetrahydrodipicolinate + NAD(+) + H2O = (2S,4S)-4-hydroxy-2,3,4,5-tetrahydrodipicolinate + NADH + H(+). The enzyme catalyses (S)-2,3,4,5-tetrahydrodipicolinate + NADP(+) + H2O = (2S,4S)-4-hydroxy-2,3,4,5-tetrahydrodipicolinate + NADPH + H(+). It functions in the pathway amino-acid biosynthesis; L-lysine biosynthesis via DAP pathway; (S)-tetrahydrodipicolinate from L-aspartate: step 4/4. Catalyzes the conversion of 4-hydroxy-tetrahydrodipicolinate (HTPA) to tetrahydrodipicolinate. This chain is 4-hydroxy-tetrahydrodipicolinate reductase, found in Burkholderia vietnamiensis (strain G4 / LMG 22486) (Burkholderia cepacia (strain R1808)).